The sequence spans 332 residues: MNKISRIIITPGEPAGIGFDLVVLISQKIWRSELVICCDPDILVKRAKDHGIKLKLHFYNKNLSPKVREKGELTIIPIKVNSNVTRGILNINNSYYVINTLTRACLGCINKEFSALVTGPVHKGIIKDSGIKFIGHTEFLAGFSLCKNPVMMLMYNSLRIALATNHIPIKDISKCINFNLIRKKLIVIFNSLRNIFKINNPCIYVCGLNPHAGESGHIGTEEINIIQPAISSLKYLPCKIIGPISADSIFQQKYLKDADAILAMYHDQGLPMIKYIGFRKSVNITLGLPFIRTSVDHGTALNIKNLNEISSKSMEKAISLAIDISQDNSIKK.

The substrate site is built by H136 and T137. A divalent metal cation-binding residues include H166, H211, and H266. The substrate site is built by K274, N283, and R292.

It belongs to the PdxA family. As to quaternary structure, homodimer. Zn(2+) serves as cofactor. It depends on Mg(2+) as a cofactor. Requires Co(2+) as cofactor.

Its subcellular location is the cytoplasm. It carries out the reaction 4-(phosphooxy)-L-threonine + NAD(+) = 3-amino-2-oxopropyl phosphate + CO2 + NADH. It participates in cofactor biosynthesis; pyridoxine 5'-phosphate biosynthesis; pyridoxine 5'-phosphate from D-erythrose 4-phosphate: step 4/5. Functionally, catalyzes the NAD(P)-dependent oxidation of 4-(phosphooxy)-L-threonine (HTP) into 2-amino-3-oxo-4-(phosphooxy)butyric acid which spontaneously decarboxylates to form 3-amino-2-oxopropyl phosphate (AHAP). In Wigglesworthia glossinidia brevipalpis, this protein is 4-hydroxythreonine-4-phosphate dehydrogenase.